The following is a 78-amino-acid chain: Dihydrofolate reductase type 2 (78 aa).

Residues 32-36 (KKSGA) and 66-69 (VQIY) contribute to the NADP(+) site. Isoleucine 68 lines the substrate pocket.

In terms of assembly, homotetramer.

The enzyme catalyses (6S)-5,6,7,8-tetrahydrofolate + NADP(+) = 7,8-dihydrofolate + NADPH + H(+). Its pathway is cofactor biosynthesis; tetrahydrofolate biosynthesis; 5,6,7,8-tetrahydrofolate from 7,8-dihydrofolate: step 1/1. Its function is as follows. Key enzyme in folate metabolism. Catalyzes an essential reaction for de novo glycine and purine synthesis, and for DNA precursor synthesis. The chain is Dihydrofolate reductase type 2 from Escherichia coli.